The sequence spans 574 residues: 2-succinyl-5-enolpyruvyl-6-hydroxy-3-cyclohexene-1-carboxylate synthase (574 aa).

The protein belongs to the TPP enzyme family. MenD subfamily. Homodimer. Mg(2+) is required as a cofactor. The cofactor is Mn(2+). Thiamine diphosphate serves as cofactor.

The enzyme catalyses isochorismate + 2-oxoglutarate + H(+) = 5-enolpyruvoyl-6-hydroxy-2-succinyl-cyclohex-3-ene-1-carboxylate + CO2. The protein operates within quinol/quinone metabolism; 1,4-dihydroxy-2-naphthoate biosynthesis; 1,4-dihydroxy-2-naphthoate from chorismate: step 2/7. It participates in cofactor biosynthesis; phylloquinone biosynthesis. In terms of biological role, catalyzes the thiamine diphosphate-dependent decarboxylation of 2-oxoglutarate and the subsequent addition of the resulting succinic semialdehyde-thiamine pyrophosphate anion to isochorismate to yield 2-succinyl-5-enolpyruvyl-6-hydroxy-3-cyclohexene-1-carboxylate (SEPHCHC). In Synechococcus sp. (strain RCC307), this protein is 2-succinyl-5-enolpyruvyl-6-hydroxy-3-cyclohexene-1-carboxylate synthase.